Reading from the N-terminus, the 90-residue chain is Large ribosomal subunit protein eL33 (90 aa).

The protein belongs to the eukaryotic ribosomal protein eL33 family.

This Methanopyrus kandleri (strain AV19 / DSM 6324 / JCM 9639 / NBRC 100938) protein is Large ribosomal subunit protein eL33.